Consider the following 227-residue polypeptide: UMP-CMP kinase (227 aa).

35–40 contributes to the ATP binding site; that stretch reads GAGKGT. Residues 55–85 are NMP; that stretch reads SAGDLLRAEQHREGSEYGQLIQTCIKEGSIV. A ribonucleoside 5'-phosphate contacts are provided by residues Arg-61, 83–85, 122–125, and Gln-129; these read SIV and GFPR. The segment at 159-169 is LID; it reads ERGKTSGREDD. Arg-160 provides a ligand contact to ATP. A ribonucleoside 5'-phosphate contacts are provided by Arg-166 and Arg-177. ATP is bound at residue Val-205.

This sequence belongs to the adenylate kinase family. UMP-CMP kinase subfamily. In terms of assembly, monomer. Mg(2+) serves as cofactor.

Its subcellular location is the cytoplasm. It localises to the nucleus. It catalyses the reaction UMP + ATP = UDP + ADP. Catalyzes the phosphorylation of pyrimidine nucleoside monophosphates at the expense of ATP. Plays an important role in de novo pyrimidine nucleotide biosynthesis. Has preference for UMP and CMP as phosphate acceptors, but can also use AMP and dCMP to a lesser extent. May play a role during the formation of basidiospores in the gill tissue. This chain is UMP-CMP kinase (uck1), found in Lentinula edodes (Shiitake mushroom).